The primary structure comprises 592 residues: Transcription factor MYC3 (592 aa).

Residues 82–141 (STGDNTVILGWGDGYYKGEEDKEKKKNNTNTAEQEHRKRVIRELNSLISGGIGVSDESND) are JAZ-interaction domain. Disordered regions lie at residues 261–313 (ENDP…VENQ), 341–361 (CGNE…NDEG), 393–422 (EPPE…AERQ), and 465–508 (QQAE…STAS). Positions 278 to 293 (SPARVNNGNNSNSNSK) are enriched in low complexity. The segment covering 294–306 (SDSHQISKLEKND) has biased composition (basic and acidic residues). Polar residues predominate over residues 352–361 (VSKGSNNDEG). Residues 398-407 (KPRKRGRKPA) show a composition bias toward basic residues. Basic and acidic residues-rich tracts occupy residues 408–422 (NGRE…AERQ) and 468–482 (ESDK…DGMS). Residues 411–460 (EEPLNHVEAERQRREKLNQRFYSLRAVVPNVSKMDKASLLGDAISYINEL) form the bHLH domain.

Homo- and heterodimer. Interacts with MYB28, MYB29, MYB34, MYB51, MYB76, MYB122, MYC2, MYC4, AFPH2/NINJA and the JAZ repressors TIFY10A/JAZ1, TIFY10B/JAZ2, TIFY6B/JAZ3, TIFY11A/JAZ5, TIFY11B/JAZ6, TIFY5B/JAZ7, TIFY5A/JAZ8, TIFY7/JAZ9, TIFY9/JAZ10, TIFY3A/JAZ11 and TIFY3B/JAZ12. In terms of tissue distribution, constitutively expressed in roots, stems, leaves, flowers, and seedlings.

It localises to the nucleus. Transcription factor involved in tryptophan, jasmonic acid (JA) and other stress-responsive gene regulation. With MYC2 and MYC4, controls additively subsets of JA-dependent responses. Can form complexes with all known glucosinolate-related MYBs to regulate glucosinolate biosynthesis. Binds to the G-box (5'-CACGTG-3') of promoters. Activates multiple TIFY/JAZ promoters. In Arabidopsis thaliana (Mouse-ear cress), this protein is Transcription factor MYC3 (MYC3).